The following is a 380-amino-acid chain: Apelin receptor (380 aa).

At 1–30 (MEEGGDFDNYYGADNQSECEYTDWKSSGAL) the chain is on the extracellular side. A glycan (N-linked (GlcNAc...) asparagine) is linked at Asn-15. 2 disulfides stabilise this stretch: Cys-19–Cys-281 and Cys-102–Cys-181. The chain crosses the membrane as a helical span at residues 31 to 54 (IPAIYMLVFLLGTTGNGLVLWTVF). Residues 55–64 (RSSREKRRSA) are Cytoplasmic-facing. A helical transmembrane segment spans residues 65–86 (DIFIASLAVADLTFVVTLPLWA). Residues 87-99 (TYTYRDYDWPFGT) lie on the Extracellular side of the membrane. The chain crosses the membrane as a helical span at residues 100 to 125 (FFCKLSSYLIFVNMYASVFCLTGLSF). Residues 126 to 146 (DRYLAIVRPVANARLRLRVSG) are Cytoplasmic-facing. A helical membrane pass occupies residues 147–164 (AVATAVLWVLAALLAMPV). Residues 165–198 (MVLRTTGDLENTTKVQCYMDYSMVATVSSEWAWE) are Extracellular-facing. Asn-175 carries N-linked (GlcNAc...) asparagine glycosylation. The chain crosses the membrane as a helical span at residues 199-223 (VGLGVSSTTVGFVVPFTIMLTCYFF). Residues 224-246 (IAQTIAGHFRKERIEGLRKRRRL) lie on the Cytoplasmic side of the membrane. Residues 247-270 (LSIIVVLVVTFALCWMPYHLVKTL) form a helical membrane-spanning segment. Topologically, residues 271-289 (YMLGSLLHWPCDFDLFLMN) are extracellular. The helical transmembrane segment at 290 to 312 (IFPYCTCISYVNSCLNPFLYAFF) threads the bilayer. The Cytoplasmic segment spans residues 313-380 (DPRFRQACTS…PYSQETLVVD (68 aa)). Over residues 342–351 (KSASYSSGHS) the composition is skewed to low complexity. Residues 342–380 (KSASYSSGHSQGPGPNMGKGGEQMHEKSIPYSQETLVVD) form a disordered region. Polar residues predominate over residues 371–380 (PYSQETLVVD).

It belongs to the G-protein coupled receptor 1 family. Homodimer; dimerization inhibits APLNR-mediated G protein and beta-arrestin signaling pathways compared to monomeric APLNR. Expressed in heart, brain, kidney, stomach, spleen, thymus, lung, ovary, small intestine and colon, adipose tissues and pancreas. Expressed in glial cells, astrocytes and neuronal subpopulations. Expressed in embryonic (ESCs) and induced (iPSCs) pluripotent stem cells.

The protein resides in the cell membrane. In terms of biological role, g protein-coupled receptor for peptide hormones apelin (APLN) and apelin receptor early endogenous ligand (APELA/ELA), that plays a role in the regulation of normal cardiovascular function and fluid homeostasis. When acting as apelin receptor, activates both G(i) protein pathway that inhibits adenylate cyclase activity, and the beta-arrestin pathway that promotes internalization of the receptor. APLNR/APJ also functions as mechanoreceptor that is activated by pathological stimuli in a G-protein-independent fashion to induce beta-arrestin signaling, hence eliciting cardiac hypertrophy. However, the presence of apelin ligand blunts cardiac hypertrophic induction from APLNR/APJ on response to pathological stimuli. Plays a key role in early development such as gastrulation, blood vessels formation and heart morphogenesis by acting as a APELA receptor. May promote angioblast migration toward the embryonic midline, i.e. the position of the future vessel formation, during vasculogenesis. Promotes sinus venosus (SV)-derived endothelial cells migration into the developing heart to promote coronary blood vessel development. Also plays a role in various processes in adults such as regulation of blood vessel formation, blood pressure, heart contractility and heart failure. Its function is as follows. (Microbial infection) Alternative coreceptor with CD4 for HIV-1 infection; may be involved in the development of AIDS dementia. The sequence is that of Apelin receptor from Homo sapiens (Human).